The sequence spans 1977 residues: Protein rotatin homolog (1977 aa).

The disordered stretch occupies residues Ser-141–Tyr-166.

This sequence belongs to the rotatin family. In terms of assembly, interacts with Rcd4;this complex is recruited to daughter centrioles before their conversion to centrosomes.

It is found in the cytoplasm. It localises to the cytoskeleton. The protein resides in the microtubule organizing center. The protein localises to the centrosome. Its subcellular location is the centriole. In terms of biological role, participes in the structural integrity of both centrioles and basal bodies and in centriole cohesion. Participates in the later stages of centriole assembly through the interaction with Rcd4 leading to the centriole to centrosome conversion. In Drosophila melanogaster (Fruit fly), this protein is Protein rotatin homolog.